A 151-amino-acid polypeptide reads, in one-letter code: Deoxyuridine 5'-triphosphate nucleotidohydrolase (151 aa).

Substrate contacts are provided by residues 70-72, Asn-83, 87-89, and Met-97; these read RSG and LID.

It belongs to the dUTPase family. Requires Mg(2+) as cofactor.

It catalyses the reaction dUTP + H2O = dUMP + diphosphate + H(+). The protein operates within pyrimidine metabolism; dUMP biosynthesis; dUMP from dCTP (dUTP route): step 2/2. Its function is as follows. This enzyme is involved in nucleotide metabolism: it produces dUMP, the immediate precursor of thymidine nucleotides and it decreases the intracellular concentration of dUTP so that uracil cannot be incorporated into DNA. This Pseudomonas entomophila (strain L48) protein is Deoxyuridine 5'-triphosphate nucleotidohydrolase.